Consider the following 322-residue polypeptide: D-alanine--D-alanine ligase (322 aa).

Residues 108-311 enclose the ATP-grasp domain; the sequence is KEFYYNAELP…FPSLLDTLIE (204 aa). 136 to 192 contacts ATP; sequence IEDLGLPLVVKPACAGSSIGISLAHTEEELLAGINHARDCSAGAIMVEQFIKGRELT. Asp265, Glu278, and Asn280 together coordinate Mg(2+).

It belongs to the D-alanine--D-alanine ligase family. Mg(2+) serves as cofactor. Requires Mn(2+) as cofactor.

It is found in the cytoplasm. It carries out the reaction 2 D-alanine + ATP = D-alanyl-D-alanine + ADP + phosphate + H(+). The protein operates within cell wall biogenesis; peptidoglycan biosynthesis. Functionally, cell wall formation. This chain is D-alanine--D-alanine ligase, found in Desulfotalea psychrophila (strain LSv54 / DSM 12343).